The primary structure comprises 388 residues: Lamin tail domain-containing protein 1 (388 aa).

One can recognise an LTD domain in the interval 136–254; sequence EVGQFTSSSL…QAIAWYTPIH (119 aa). The segment at 349–388 is disordered; the sequence is EPHNTSTAGGRLDRQPRTRSTRPNRASGSKKKKTSESQKQ. Positions 365 to 381 are enriched in basic residues; it reads RTRSTRPNRASGSKKKK.

The protein belongs to the intermediate filament family.

This chain is Lamin tail domain-containing protein 1 (LMNTD1), found in Homo sapiens (Human).